A 66-amino-acid polypeptide reads, in one-letter code: Large ribosomal subunit protein uL29 (66 aa).

Belongs to the universal ribosomal protein uL29 family.

This Pseudothermotoga lettingae (strain ATCC BAA-301 / DSM 14385 / NBRC 107922 / TMO) (Thermotoga lettingae) protein is Large ribosomal subunit protein uL29.